Here is a 728-residue protein sequence, read N- to C-terminus: MADPSSYRPRPGEIPDSPGVYRFRDEHRRVIYVGKAKSLRQRLANYFQDLAHLHPRTRTMVTTAASVEWTVVSTEVEALQLEYSWIKEYDPRFNVKYRDDKSYPYLAVTMNEEFPRVQVMRGQKKKGVRYFGPYGHAWAIRDTVDLLLRVFPVRTCSAGVFKNAARTGRPCLLGYIGKCSAPCVGRITPDDHWDLADEFCDFMAGRTGTYLRRLERQMAEAAEEMEYERAARLRDDIGALKKAMEKSAVVLADATDADLIAVAEDELEAAVQIFHVRGGRVRGQRGWVTDKVEEITTGALVEHALQQLYGEEKGDAVPKEVLVPALPDPVEPVQQWLAERRGSGVSLRIPQRGDKKALMETVQRNAQQALVLHKTKRASDLTTRSRALEEIAEALDLDSAPLRIECYDISHLQGDDVVASMVVFEDGLARKSEYRRFQIKGFEGQDDVRSMHEVITRRFRRYLAEKERTGEWADGEGLVDDARHPNGDAAPNGDAAPNDGAAPDDGAARTDGRGLTDGQELTDGPALKDDDGRPKRFAYPPQLVVVDGGQPQVAAAQRALDELGIDDIAVCGLAKRLEEVWLPREDDPVVLPRTSEGLYLLQRVRDEAHRFAITYQRAKRAKRFRAGPLDDVPGLGETRKQALIKHFGSVKKLRSATIDQICEVPGIGRKTAETVAVALARATPAAPAVNTATGEIMDDDDGAPETTADAPGEPVSAGTPDERRGQER.

The GIY-YIG domain maps to 16 to 95 (DSPGVYRFRD…IKEYDPRFNV (80 aa)). The region spanning 208-243 (GTYLRRLERQMAEAAEEMEYERAARLRDDIGALKKA) is the UVR domain. Disordered stretches follow at residues 473–535 (ADGE…GRPK) and 689–728 (VNTA…GQER). A compositionally biased stretch (low complexity) spans 487–505 (GDAAPNGDAAPNDGAAPDD).

Belongs to the UvrC family. As to quaternary structure, interacts with UvrB in an incision complex.

It localises to the cytoplasm. Its function is as follows. The UvrABC repair system catalyzes the recognition and processing of DNA lesions. UvrC both incises the 5' and 3' sides of the lesion. The N-terminal half is responsible for the 3' incision and the C-terminal half is responsible for the 5' incision. The protein is UvrABC system protein C of Streptomyces coelicolor (strain ATCC BAA-471 / A3(2) / M145).